The following is a 169-amino-acid chain: Cytochrome c-type biogenesis protein CcmE (169 aa).

Residues 1–7 (MTRKSRR) are Cytoplasmic-facing. The helical; Signal-anchor for type II membrane protein transmembrane segment at 8–28 (LILIAACGAVLALALGLILSA) threads the bilayer. Residues 29–169 (MSGSIVFFRS…DATLGQRSER (141 aa)) lie on the Periplasmic side of the membrane. Residues H122 and Y126 each coordinate heme. Residues 135-169 (LKAQGRWQEGGGKEAPKDAAKPASADATLGQRSER) form a disordered region. The span at 145 to 154 (GGKEAPKDAA) shows a compositional bias: basic and acidic residues.

The protein belongs to the CcmE/CycJ family.

It is found in the cell inner membrane. Heme chaperone required for the biogenesis of c-type cytochromes. Transiently binds heme delivered by CcmC and transfers the heme to apo-cytochromes in a process facilitated by CcmF and CcmH. The chain is Cytochrome c-type biogenesis protein CcmE from Methylorubrum populi (strain ATCC BAA-705 / NCIMB 13946 / BJ001) (Methylobacterium populi).